A 152-amino-acid polypeptide reads, in one-letter code: Small ribosomal subunit protein uS15 (152 aa).

The segment covering 1–11 (MAKMHTKRKGK) has biased composition (basic residues). Residues 1 to 24 (MAKMHTKRKGKSSSTRPNRTEPPE) are disordered.

It belongs to the universal ribosomal protein uS15 family. In terms of assembly, part of the 30S ribosomal subunit.

This is Small ribosomal subunit protein uS15 from Methanosarcina mazei (strain ATCC BAA-159 / DSM 3647 / Goe1 / Go1 / JCM 11833 / OCM 88) (Methanosarcina frisia).